Reading from the N-terminus, the 83-residue chain is Putative defensin-like protein 131 (83 aa).

The signal sequence occupies residues M1–G34. Cystine bridges form between C37–C83, C46–C65, C51–C77, and C55–C79.

The protein belongs to the DEFL family.

It localises to the secreted. The chain is Putative defensin-like protein 131 (LCR29) from Arabidopsis thaliana (Mouse-ear cress).